Here is a 630-residue protein sequence, read N- to C-terminus: Multidrug transporter TPO3 (630 aa).

The segment covering 1-35 has biased composition (polar residues); sequence MVDQESLVSFSSETSQSINSDIDIESQQQPRQYIP. Disordered stretches follow at residues 1–46 and 107–157; these read MVDQ…KERL and TSTA…NQQP. Over residues 37 to 46 the composition is skewed to basic and acidic residues; the sequence is NEKDGNKERL. Residues 125–137 are compositionally biased toward low complexity; the sequence is RRSQNIAASSNSS. Asn-135 carries N-linked (GlcNAc...) asparagine glycosylation. Helical transmembrane passes span 190–210, 222–242, 252–272, 282–302, 312–332, 342–362, 423–443, 453–473, 494–514, 519–539, 553–575, and 587–607; these read ILSC…GGLF, AAIL…LIWS, LAYF…ALSP, FLCG…IADM, IAFF…VNGF, LIFW…AFIP, FYVC…PVVF, LIGL…ATTF, LFGA…LGAT, IIWV…VLIY, YASS…FPLF, and WASW…FGFY.

The protein belongs to the major facilitator superfamily. DHA1 family. Polyamines/proton antiporter (TC 2.A.1.2.16) subfamily.

It is found in the cell membrane. Cell membrane polyamine/proton antiporter, involved in the detoxification of excess polyamines in the cytoplasm. Involved in the resistance to the imidazole antifungal drugs tioconazole, miconazole, clotrimazole and ketoconazole; to the triazole fluconazole; but not to the antifungals flucytosine or amphotericin B. Plays a role in spermine homeostasis, but spermine accumulation in response to clotrimazole is independent of TPO3. This chain is Multidrug transporter TPO3, found in Candida glabrata (strain ATCC 2001 / BCRC 20586 / JCM 3761 / NBRC 0622 / NRRL Y-65 / CBS 138) (Yeast).